Here is a 209-residue protein sequence, read N- to C-terminus: Eukaryotic translation initiation factor 4E (209 aa).

MRNA-binding positions include 51–52 (WH), 97–98 (WE), and 153–158 (RKQAYR).

This sequence belongs to the eukaryotic initiation factor 4E family. In terms of assembly, eIF4F is a multi-subunit complex, the composition of which varies with external and internal environmental conditions. It is composed of at least eIF4A, eIF4E and eIF4G. eIF4E is also known to interact with other partners.

Its function is as follows. Recognizes and binds the 7-methylguanosine-containing mRNA cap during an early step in the initiation of protein synthesis and facilitates ribosome binding by inducing the unwinding of the mRNAs secondary structures. The protein is Eukaryotic translation initiation factor 4E (TIF45) of Candida albicans (strain SC5314 / ATCC MYA-2876) (Yeast).